Reading from the N-terminus, the 32-residue chain is U5-ctenitoxin-Pn1a (32 aa).

Cystine bridges form between Cys-3–Cys-16, Cys-9–Cys-21, and Cys-15–Cys-30.

As to expression, expressed by the venom gland.

The protein resides in the secreted. Functionally, blocks voltage-gated sodium channels (Nav). Causes tail erection, scratching and a reduction in mobility at a dose level of 1.40 mg/mouse. In Phoneutria nigriventer (Brazilian armed spider), this protein is U5-ctenitoxin-Pn1a.